Reading from the N-terminus, the 440-residue chain is Streptokinase A (440 aa).

An N-terminal signal peptide occupies residues 1 to 26 (MKNYLSIGVIALLFALTFGTVKSVQA).

This protein is not a protease, but it activates plasminogen by complexing with it. As a potential virulence factor, it is thought to prevent the formation of effective fibrin barriers around the site of infection, thereby contributing to the invasiveness of the cells. This is Streptokinase A (ska) from Streptococcus pyogenes serotype M1.